The sequence spans 263 residues: Indolethylamine N-methyltransferase (263 aa).

Lys-13 is subject to N6-succinyllysine. Residues Tyr-20, Tyr-25, 63 to 64, Tyr-69, Asp-85, and Asn-90 each bind S-adenosyl-L-methionine; that span reads GS. The residue at position 96 (Lys-96) is an N6-succinyllysine. S-adenosyl-L-methionine-binding positions include 142–143 and Leu-163; that span reads DA.

This sequence belongs to the class I-like SAM-binding methyltransferase superfamily. NNMT/PNMT/TEMT family. Monomer. As to expression, highly expressed in lung, also detected in liver and at very low levels in brain.

The protein localises to the cytoplasm. The catalysed reaction is a tertiary amine + S-adenosyl-L-methionine = a methylated tertiary amine + S-adenosyl-L-homocysteine + H(+). The enzyme catalyses a secondary amine + S-adenosyl-L-methionine = a methylated secondary amine + S-adenosyl-L-homocysteine + H(+). It carries out the reaction a primary amine + S-adenosyl-L-methionine = a methylated primary amine + S-adenosyl-L-homocysteine + H(+). It catalyses the reaction dimethyl sulfide + S-adenosyl-L-methionine = trimethylsulfonium + S-adenosyl-L-homocysteine. In terms of biological role, catalyzes the N-methylation of tryptamine and structurally related compounds. Functions as a thioether S-methyltransferase and is active with a variety of thioethers and the corresponding selenium and tellurium compounds, including 3-methylthiopropionaldehyde, dimethyl selenide, dimethyl telluride, 2-methylthioethylamine, 2-methylthioethanol, methyl-n-propyl sulfide and diethyl sulfide. Plays an important role in the detoxification of selenium compounds. In Oryctolagus cuniculus (Rabbit), this protein is Indolethylamine N-methyltransferase (INMT).